The primary structure comprises 172 residues: Large ribosomal subunit protein uL10 (172 aa).

The protein belongs to the universal ribosomal protein uL10 family. In terms of assembly, part of the ribosomal stalk of the 50S ribosomal subunit. The N-terminus interacts with L11 and the large rRNA to form the base of the stalk. The C-terminus forms an elongated spine to which L12 dimers bind in a sequential fashion forming a multimeric L10(L12)X complex.

Its function is as follows. Forms part of the ribosomal stalk, playing a central role in the interaction of the ribosome with GTP-bound translation factors. The sequence is that of Large ribosomal subunit protein uL10 from Beijerinckia indica subsp. indica (strain ATCC 9039 / DSM 1715 / NCIMB 8712).